Consider the following 233-residue polypeptide: MTRLAILLSILAIGLILLIINHDTGRTMGLANDQFGQLVSLGAIATLIGAGILQSRHRFGEGLRQIAIWLFVVLALVSAYVYRFELEGFGNRLLAGLIPGRATIITDSEGQQEVVLQKMLNGHFETTATVDGKDISMLVDTGASNIALTYEDAEKIGLDPANLNFIVTVMTANGRAQAAPVMLQEISIGPITRRNIGATVAAKGKLDQSLLGMSFLSTLEMLQMRTDELRLRD.

3 helical membrane-spanning segments follow: residues 4–24 (LAIL…NHDT), 35–55 (FGQL…ILQS), and 66–86 (IAIW…RFEL).

The protein localises to the cell membrane. This is an uncharacterized protein from Sinorhizobium sp.